A 367-amino-acid polypeptide reads, in one-letter code: 2-aminoethylphosphonate--pyruvate transaminase (367 aa).

N6-(pyridoxal phosphate)lysine is present on K194.

Belongs to the class-V pyridoxal-phosphate-dependent aminotransferase family. PhnW subfamily. Homodimer. It depends on pyridoxal 5'-phosphate as a cofactor.

The enzyme catalyses (2-aminoethyl)phosphonate + pyruvate = phosphonoacetaldehyde + L-alanine. Its function is as follows. Involved in phosphonate degradation. The sequence is that of 2-aminoethylphosphonate--pyruvate transaminase from Salmonella schwarzengrund (strain CVM19633).